A 552-amino-acid chain; its full sequence is MDIKRTVLWVIFFMSAVMLYDNWQRDHGRPSMFFPSATHTAPAAAGGASGTSATTAGDVPAAAAGAAPSTTAPAAQAQLVKFSTDVYDGEIDTRGGTLAKLTLKKQGDGKQPDLYITLFDHTAGHTYLARTGLLGGDFPNHNDVYTQLNPGSTSLTGDENTLKLSFESPVKGGVKVVKTYTFTRGSYVIGVDTKIDNVGTAPVTPTVYMELVRDNTAVETPMFSHTFLGPAVYTDAKHFQKIDFSDLDKNKANFEKSSDNGWVAMVQHYFASAWIPQQGAKRDIYAEKIDPTLYRVGVKQPVAAIAPGQSADVQARLFAGPEEERMLEGIAPGLELVKDYGWVTIIAKPLFWLLEKIHGYVGNWGWAIVLLTVLIKAVFFPLSAASYKSMARMKEITPRMQALRERFKSDPQKMNAALMELYKTEKVNPFGGCLPVVIQIPVFISLYWVLLASVEMRGAPWILWIHDLSQRDPFFILPVLMAVSMFVQTSLNPTPPDPVQAKMMKFMPIAFSVMFFFFPAGLVLYYVVNNVLSIAQQYYITRKLGGVKKKPA.

5 helical membrane-spanning segments follow: residues 7–24 (VLWV…DNWQ), 364–384 (WGWA…PLSA), 434–454 (LPVV…LASV), 473–493 (PFFI…SLNP), and 508–528 (PIAF…YYVV).

This sequence belongs to the OXA1/ALB3/YidC family. Type 1 subfamily. In terms of assembly, interacts with the Sec translocase complex via SecD. Specifically interacts with transmembrane segments of nascent integral membrane proteins during membrane integration.

The protein resides in the cell inner membrane. Its function is as follows. Required for the insertion and/or proper folding and/or complex formation of integral membrane proteins into the membrane. Involved in integration of membrane proteins that insert both dependently and independently of the Sec translocase complex, as well as at least some lipoproteins. Aids folding of multispanning membrane proteins. The protein is Membrane protein insertase YidC of Burkholderia cenocepacia (strain HI2424).